The chain runs to 474 residues: Aspartyl/glutamyl-tRNA(Asn/Gln) amidotransferase subunit B (474 aa).

It belongs to the GatB/GatE family. GatB subfamily. Heterotrimer of A, B and C subunits.

It catalyses the reaction L-glutamyl-tRNA(Gln) + L-glutamine + ATP + H2O = L-glutaminyl-tRNA(Gln) + L-glutamate + ADP + phosphate + H(+). It carries out the reaction L-aspartyl-tRNA(Asn) + L-glutamine + ATP + H2O = L-asparaginyl-tRNA(Asn) + L-glutamate + ADP + phosphate + 2 H(+). Its function is as follows. Allows the formation of correctly charged Asn-tRNA(Asn) or Gln-tRNA(Gln) through the transamidation of misacylated Asp-tRNA(Asn) or Glu-tRNA(Gln) in organisms which lack either or both of asparaginyl-tRNA or glutaminyl-tRNA synthetases. The reaction takes place in the presence of glutamine and ATP through an activated phospho-Asp-tRNA(Asn) or phospho-Glu-tRNA(Gln). The protein is Aspartyl/glutamyl-tRNA(Asn/Gln) amidotransferase subunit B of Campylobacter curvus (strain 525.92).